A 578-amino-acid chain; its full sequence is Frizzled and smoothened-like protein Q (578 aa).

The first 23 residues, 1–23, serve as a signal peptide directing secretion; that stretch reads MKNSFLINILIIYYLFIILFVNS. Residues 24–233 are Extracellular-facing; that stretch reads QDLKLGGSCE…GKTKILDRTN (210 aa). Residues 27-157 enclose the FZ domain; sequence KLGGSCELID…GAPMFPINST (131 aa). Cystine bridges form between Cys-32–Cys-95, Cys-41–Cys-88, Cys-79–Cys-128, and Cys-121–Cys-141. Asn-46, Asn-64, Asn-99, and Asn-104 each carry an N-linked (GlcNAc...) asparagine glycan. Residues Asn-144, Asn-155, Asn-181, and Asn-233 are each glycosylated (N-linked (GlcNAc...) asparagine). A helical transmembrane segment spans residues 234-254; it reads YTLTSISFITCIFMILTFGVL. Residues 255 to 261 lie on the Cytoplasmic side of the membrane; the sequence is PNKITHR. Residues 262–282 form a helical membrane-spanning segment; it reads MESILSFACGGCITALSLFIQ. The Extracellular segment spans residues 283–305; the sequence is SRQDNFNCSSDPGRFKSQSDYLC. Asn-289 is a glycosylation site (N-linked (GlcNAc...) asparagine). The chain crosses the membrane as a helical span at residues 306–326; that stretch reads LLTGLIFQFGAITSIFWSPMI. At 327–341 the chain is on the cytoplasmic side; it reads AYDFYITSTLGKIRK. The chain crosses the membrane as a helical span at residues 342-362; sequence FGLYRIVLWSFIFVLTALPAF. At 363-388 the chain is on the extracellular side; it reads GGKYSATVATNCWINSDDGSAWQYVS. Residues 389–409 traverse the membrane as a helical segment; the sequence is FYIPSWCAMGLICLFSILSVI. Residues 410–422 are Cytoplasmic-facing; it reads NVSKMYIQTPNNR. The chain crosses the membrane as a helical span at residues 423 to 443; it reads ILFFNIKILITLLLFLFVLTF. The Extracellular segment spans residues 444 to 490; it reads ASSLKFYMEERMDTYFDAIAVWVECIGKGDPSQCELHAPGYDLKALN. Residues 491–511 traverse the membrane as a helical segment; it reads IVVIGILGFTVFIGYGLDPIV. At 512–578 the chain is on the cytoplasmic side; the sequence is IHIWMESKKF…LKSTEINQQP (67 aa). Over residues 544–556 the composition is skewed to low complexity; that stretch reads NNNNNETASTSSG. A disordered region spans residues 544–578; that stretch reads NNNNNETASTSSGNERKQTTVKMSNLKSTEINQQP. Residues 563–578 show a composition bias toward polar residues; it reads TVKMSNLKSTEINQQP.

It belongs to the G-protein coupled receptor Fz/Smo family.

The protein localises to the membrane. This is Frizzled and smoothened-like protein Q (fslQ) from Dictyostelium discoideum (Social amoeba).